The sequence spans 422 residues: Phospho-N-acetylmuramoyl-pentapeptide-transferase (422 aa).

A run of 9 helical transmembrane segments spans residues 28-48, 71-91, 95-115, 136-156, 211-231, 246-266, 279-299, 313-333, and 399-419; these read LMAIILALLISSIWGDKFINL, VGVPSMGGVIIIVAILIPCLL, LHNIYMILMLITTVWLGSLGF, IIGQVGLGLIVGLTLYLSPDV, AGWILFVIITIFVVTAVSNGA, AIIGLTLGILAYVSSHIEFAG, LVIFICAFIGALIGFLWYNAY, IGGIIAVFAIIIHKELLIPIL, and KITVRFWIVTIVLAAITIITL.

It belongs to the glycosyltransferase 4 family. MraY subfamily. The cofactor is Mg(2+).

The protein resides in the cell inner membrane. The enzyme catalyses UDP-N-acetyl-alpha-D-muramoyl-L-alanyl-gamma-D-glutamyl-meso-2,6-diaminopimeloyl-D-alanyl-D-alanine + di-trans,octa-cis-undecaprenyl phosphate = di-trans,octa-cis-undecaprenyl diphospho-N-acetyl-alpha-D-muramoyl-L-alanyl-D-glutamyl-meso-2,6-diaminopimeloyl-D-alanyl-D-alanine + UMP. Its pathway is cell wall biogenesis; peptidoglycan biosynthesis. Its function is as follows. Catalyzes the initial step of the lipid cycle reactions in the biosynthesis of the cell wall peptidoglycan: transfers peptidoglycan precursor phospho-MurNAc-pentapeptide from UDP-MurNAc-pentapeptide onto the lipid carrier undecaprenyl phosphate, yielding undecaprenyl-pyrophosphoryl-MurNAc-pentapeptide, known as lipid I. The protein is Phospho-N-acetylmuramoyl-pentapeptide-transferase of Bacteroides fragilis (strain ATCC 25285 / DSM 2151 / CCUG 4856 / JCM 11019 / LMG 10263 / NCTC 9343 / Onslow / VPI 2553 / EN-2).